The following is a 659-amino-acid chain: tRNA (guanine(26)-N(2))-dimethyltransferase (659 aa).

The transit peptide at Met1–Phe23 directs the protein to the mitochondrion. The Trm1 methyltransferase domain maps to Thr55–Met499. Residue Arg82 participates in S-adenosyl-L-methionine binding. Ser120 is subject to Phosphoserine. 2 residues coordinate S-adenosyl-L-methionine: Arg166 and Asp184. The Zn(2+) site is built by Cys348, Cys351, Cys384, and Cys387. The residue at position 517 (Ser517) is a Phosphoserine. Disordered stretches follow at residues Glu537 to Glu578 and Arg616 to Asp659. The short motif at Ser543 to Ala575 is the Nuclear localization signal element. The segment at Arg600–Pro627 adopts a C3H1-type zinc-finger fold. Residue Ser625 is modified to Phosphoserine. Phosphothreonine occurs at positions 628 and 646.

The protein belongs to the class I-like SAM-binding methyltransferase superfamily. Trm1 family. In terms of processing, (Microbial infection) Cleaved between Gln-530 and Ala-531 by the 3C-like proteinase nsp5 from human coronavirus SARS-CoV-2, leading to its inactivation.

The protein resides in the mitochondrion. The protein localises to the nucleus. Its subcellular location is the cytoplasm. It catalyses the reaction guanosine(26) in tRNA + 2 S-adenosyl-L-methionine = N(2)-dimethylguanosine(26) in tRNA + 2 S-adenosyl-L-homocysteine + 2 H(+). Its function is as follows. Dimethylates a single guanine residue at position 26 of most nuclear- and mitochondrial-encoded tRNAs using S-adenosyl-L-methionine as donor of the methyl groups. tRNA guanine(26)-dimethylation is required for redox homeostasis and ensure proper cellular proliferation and oxidative stress survival. The chain is tRNA (guanine(26)-N(2))-dimethyltransferase from Homo sapiens (Human).